Reading from the N-terminus, the 336-residue chain is MSRVTLSRYLIEQTRSNNTPADLRFLIEVVARACKEISHHVSKGALGGVLGSMGTENVQGEVQKKLDVISNDILLEANEWGGHLAGMASEEMDNAYQIPGKYPKGAYLLVFDPLDGSSNIDVNVSVGTIFSVLRCPNQYLSQNESLNEAAFLQPGTEQVAAGYAIYGPQTMLILTLGNGVKGFTLDRELGSFVLTHENIRVPETTAEFAINMSNQRHWEAPVQRYVGELLAGETGPLKKNYNMRWIASMVADVHRILTRGGLFMYPRDAREPSKPGKLRLMYEANPMSFIIEQAGGASTNGYDRILDIKPESLHQRVSVILGSKEEVERVTAYHKE.

Mg(2+) contacts are provided by Glu90, Asp112, Leu114, and Asp115. Substrate contacts are provided by residues Asp115 to Ser118, Asn211, and Lys277. Glu283 contributes to the Mg(2+) binding site.

The protein belongs to the FBPase class 1 family. Homotetramer. Requires Mg(2+) as cofactor.

The protein localises to the cytoplasm. It catalyses the reaction beta-D-fructose 1,6-bisphosphate + H2O = beta-D-fructose 6-phosphate + phosphate. It participates in carbohydrate biosynthesis; gluconeogenesis. In Pseudomonas entomophila (strain L48), this protein is Fructose-1,6-bisphosphatase class 1.